Reading from the N-terminus, the 138-residue chain is Protein NrdI (138 aa).

It belongs to the NrdI family.

Probably involved in ribonucleotide reductase function. In Mycobacterium leprae (strain TN), this protein is Protein NrdI.